Reading from the N-terminus, the 772-residue chain is Hyperosmolality-gated Ca2+ permeable channel 1.1 (772 aa).

At 1–5 (MATLK) the chain is on the extracellular side. The helical transmembrane segment at 6 to 28 (DIGVSAGINILTAFIFFIIFAFL) threads the bilayer. Residues 29 to 100 (RLQPFNDRVY…AGLDSVVYLR (72 aa)) lie on the Cytoplasmic side of the membrane. A helical transmembrane segment spans residues 101-122 (IYWLGLKIFAPIAMLAWAVLVP). The Extracellular portion of the chain corresponds to 123–159 (VNWTNNELELAKHFKNVTSSDIDKLTISNIPEGSNRF). The N-linked (GlcNAc) asparagine glycan is linked to Asn138. The helical transmembrane segment at 160–180 (WAHIIMAYAFTIWTCYMLMKE) threads the bilayer. The Cytoplasmic portion of the chain corresponds to 181–372 (YETVANMRLQ…PNLAIPYVSL (192 aa)). Residues 339 to 344 (QTTQTR) are cytoplasmic region required for homodimerization. The helical transmembrane segment at 373 to 398 (TVRRLVMNVAFFFLTFFFIIPIAFVQ) threads the bilayer. Over 399–424 (SLATIEGIEKVAPFLKVIIEKDFIKS) the chain is Extracellular. Residues 425 to 450 (LIQGLLAGIALKLFLIFLPAILMTMS) form a helical membrane-spanning segment. The Cytoplasmic portion of the chain corresponds to 451–461 (KFEGFTSVSFL). Residues 462-485 (ERRSASRYYIFNLVNVFLGSVIAG) traverse the membrane as a helical segment. The Extracellular segment spans residues 486–509 (AAFEQLNSFLNQSPNQIPKTIGMA). A helical membrane pass occupies residues 510–538 (IPMKATFFITYIMVDGWAGVAGEILMLKP). The Cytoplasmic segment spans residues 539–566 (LIIYHLKNAFLVKTEKDREEAMNPGSIG). The chain crosses the membrane as a helical span at residues 567 to 587 (FNTGEPQIQLYFLLGLVYAPV). Thr588 is a topological domain (extracellular). A helical membrane pass occupies residues 589–606 (PMLLPFILVFFALAYVVY). The Cytoplasmic segment spans residues 607-624 (RHQIINVYNQEYESAAAF). The helical transmembrane segment at 625-647 (WPDVHGRVITALIISQLLLMGLL) threads the bilayer. Over 648–653 (GTKHAA) the chain is Extracellular. Residues 654–674 (SAAPFLIALPVITIGFHRFCK) form a helical membrane-spanning segment. At 675–772 (GRFEPAFVRY…SLAVINGKEV (98 aa)) the chain is on the cytoplasmic side. The interval 686 to 688 (LQE) is cytoplasmic region required for homodimerization. The disordered stretch occupies residues 743–772 (KRQSRRNTPAPSRISGESSPSLAVINGKEV). Over residues 748 to 763 (RNTPAPSRISGESSPS) the composition is skewed to polar residues.

It belongs to the CSC1 (TC 1.A.17) family. In terms of assembly, homodimer. In terms of tissue distribution, expressed in leaves, flowers, roots and guard cells.

The protein resides in the cell membrane. With respect to regulation, activated by mechanical pressure. Its function is as follows. Acts as a hyperosmolarity-gated non-selective cation channel that permeates Ca(2+) ions. Shows the following permeability sequence: K(+) &gt; Ba(2+) = Ca(2+) &gt; Na(+) = Mg(2+) = Cs(+). Mechanosensitive ion channel that converts mechanical stimuli into a flow of ions: activated in response to membrane stretch and poke. The polypeptide is Hyperosmolality-gated Ca2+ permeable channel 1.1 (Arabidopsis thaliana (Mouse-ear cress)).